Here is a 277-residue protein sequence, read N- to C-terminus: Pantothenate synthetase (277 aa).

26 to 33 (MGNLHEGH) provides a ligand contact to ATP. H33 functions as the Proton donor in the catalytic mechanism. (R)-pantoate is bound at residue Q57. Q57 contacts beta-alanine. 144–147 (GKKD) contacts ATP. Q150 contributes to the (R)-pantoate binding site. ATP is bound by residues V173 and 181–184 (LSSR).

This sequence belongs to the pantothenate synthetase family. As to quaternary structure, homodimer.

The protein localises to the cytoplasm. The catalysed reaction is (R)-pantoate + beta-alanine + ATP = (R)-pantothenate + AMP + diphosphate + H(+). It functions in the pathway cofactor biosynthesis; (R)-pantothenate biosynthesis; (R)-pantothenate from (R)-pantoate and beta-alanine: step 1/1. Functionally, catalyzes the condensation of pantoate with beta-alanine in an ATP-dependent reaction via a pantoyl-adenylate intermediate. The protein is Pantothenate synthetase of Paraburkholderia phymatum (strain DSM 17167 / CIP 108236 / LMG 21445 / STM815) (Burkholderia phymatum).